Consider the following 259-residue polypeptide: Trans-4-hydroxycyclohexanecarboxylate dehydrogenase (259 aa).

11 residues coordinate NAD(+): Arg-20, Met-22, Asp-41, Asp-73, Val-74, Asn-100, Tyr-164, Lys-168, Val-197, Thr-199, and Thr-202. The active-site Proton acceptor is Tyr-164.

It belongs to the short-chain dehydrogenases/reductases (SDR) family. Homodimer. Homotetramer.

The enzyme catalyses trans-4-hydroxycyclohexane-1-carboxylate + NAD(+) = 4-oxocyclohexane-1-carboxylate + NADH + H(+). With respect to regulation, strongly inhibited by N-bromosuccinimide. Not inhibited by sulfhydryl reagents, such as iodoacetic acid, iodoacetamide, N-ethylmaleimide and p-hydroxymercuribenzoic acid. In terms of biological role, dehydrogenase involved in a cyclohexanecarboxylate (CHCA) degradation pathway. Catalyzes the NAD(+)-dependent dehydrogenation of trans-4-hydroxycyclohexanecarboxylate (trans-4-hydroxyCHCA) to form 4-oxocyclohexanecarboxylate (4-oxoCHCA). Is highly specific for the trans-4-hydroxy derivative and shows only weak activity with cis-4-hydroxyCHCA. Can also catalyze the reverse reaction (4-oxoCHCA reduction) with a higher catalytic efficiency. In the reverse reaction, is highly specific for 4-oxoCHCA and cannot use either the 2-oxo or the 3-oxo homolog as substrate. Cannot use NADP(+). This chain is Trans-4-hydroxycyclohexanecarboxylate dehydrogenase, found in Sinomonas cyclohexanicum (Corynebacterium cyclohexanicum).